The sequence spans 333 residues: Probable malate dehydrogenase 3 (333 aa).

12-18 (GAAGQIA) contributes to the NAD(+) binding site. Substrate-binding residues include arginine 93 and arginine 99. NAD(+) contacts are provided by residues asparagine 106, glutamine 113, and 130-132 (VGN). Substrate contacts are provided by asparagine 132 and arginine 163. Histidine 188 acts as the Proton acceptor in catalysis.

The protein belongs to the LDH/MDH superfamily. MDH type 2 family. Homodimer.

The enzyme catalyses (S)-malate + NAD(+) = oxaloacetate + NADH + H(+). In terms of biological role, catalyzes the reversible oxidation of malate to oxaloacetate. This Dictyostelium discoideum (Social amoeba) protein is Probable malate dehydrogenase 3 (mdhC).